Reading from the N-terminus, the 321-residue chain is Glucokinase (321 aa).

8–13 (ADIGGT) contacts ATP.

This sequence belongs to the bacterial glucokinase family.

Its subcellular location is the cytoplasm. The enzyme catalyses D-glucose + ATP = D-glucose 6-phosphate + ADP + H(+). This is Glucokinase from Paramagnetospirillum magneticum (strain ATCC 700264 / AMB-1) (Magnetospirillum magneticum).